A 327-amino-acid polypeptide reads, in one-letter code: tRNA pseudouridine synthase B (327 aa).

The active-site Nucleophile is Asp-83.

This sequence belongs to the pseudouridine synthase TruB family. Type 1 subfamily.

It catalyses the reaction uridine(55) in tRNA = pseudouridine(55) in tRNA. Functionally, responsible for synthesis of pseudouridine from uracil-55 in the psi GC loop of transfer RNAs. This Mesomycoplasma hyopneumoniae (strain 232) (Mycoplasma hyopneumoniae) protein is tRNA pseudouridine synthase B.